A 47-amino-acid polypeptide reads, in one-letter code: Lysis protein for colicin E5 (47 aa).

The first 19 residues, 1–19 (MKKITWIILLLLAAIILAA), serve as a signal peptide directing secretion. Cys-20 carries N-palmitoyl cysteine lipidation. A lipid anchor (S-diacylglycerol cysteine) is attached at Cys-20.

It is found in the cell outer membrane. Functionally, lysis proteins are required for both colicin release and partial cell lysis. The protein is Lysis protein for colicin E5 (lys) of Escherichia coli.